The sequence spans 85 residues: Translation initiation factor IF-1 (85 aa).

Positions 1–72 constitute an S1-like domain; that stretch reads MAKEELIEMH…SKGRITFRHI (72 aa).

Belongs to the IF-1 family. As to quaternary structure, component of the 30S ribosomal translation pre-initiation complex which assembles on the 30S ribosome in the order IF-2 and IF-3, IF-1 and N-formylmethionyl-tRNA(fMet); mRNA recruitment can occur at any time during PIC assembly.

It is found in the cytoplasm. Its function is as follows. One of the essential components for the initiation of protein synthesis. Stabilizes the binding of IF-2 and IF-3 on the 30S subunit to which N-formylmethionyl-tRNA(fMet) subsequently binds. Helps modulate mRNA selection, yielding the 30S pre-initiation complex (PIC). Upon addition of the 50S ribosomal subunit IF-1, IF-2 and IF-3 are released leaving the mature 70S translation initiation complex. The polypeptide is Translation initiation factor IF-1 (Polaromonas naphthalenivorans (strain CJ2)).